Here is a 364-residue protein sequence, read N- to C-terminus: Fructose-bisphosphate aldolase A (364 aa).

Phosphotyrosine is present on Tyr5. Phosphothreonine is present on Thr9. Residues Ser36 and Ser39 each carry the phosphoserine modification. Residue Lys42 is modified to N6-acetyllysine; alternate. Residue Lys42 forms a Glycyl lysine isopeptide (Lys-Gly) (interchain with G-Cter in SUMO1); alternate linkage. Lys42 participates in a covalent cross-link: Glycyl lysine isopeptide (Lys-Gly) (interchain with G-Cter in SUMO2); alternate. Arg43 contributes to the beta-D-fructose 1,6-bisphosphate binding site. Ser46 carries the post-translational modification Phosphoserine. Position 99 is an N6-(2-hydroxyisobutyryl)lysine (Lys99). Position 108 is an N6-acetyllysine (Lys108). An N6-acetyllysine; alternate modification is found at Lys111. Residue Lys111 is modified to N6-malonyllysine; alternate. At Ser132 the chain carries Phosphoserine. Lys147 carries the post-translational modification N6-(2-hydroxyisobutyryl)lysine. The active-site Proton acceptor is Glu188. Lys230 (schiff-base intermediate with dihydroxyacetone-P) is an active-site residue. Phosphoserine is present on Ser272. Residues Ser272–Gly274, Ser301, and Arg304 each bind beta-D-fructose 1,6-bisphosphate. Lys312 carries the post-translational modification N6-malonyllysine. At Lys330 the chain carries N6-acetyllysine.

Belongs to the class I fructose-bisphosphate aldolase family. As to quaternary structure, homotetramer. Interacts with SNX9 and WAS. Interacts with FBP2; the interaction blocks FBP2 inhibition by physiological concentrations of AMP and reduces inhibition by Ca(2+).

The protein resides in the cytoplasm. The protein localises to the myofibril. It localises to the sarcomere. Its subcellular location is the i band. It is found in the m line. It carries out the reaction beta-D-fructose 1,6-bisphosphate = D-glyceraldehyde 3-phosphate + dihydroxyacetone phosphate. Its pathway is carbohydrate degradation; glycolysis; D-glyceraldehyde 3-phosphate and glycerone phosphate from D-glucose: step 4/4. Its function is as follows. Catalyzes the reversible conversion of beta-D-fructose 1,6-bisphosphate (FBP) into two triose phosphate and plays a key role in glycolysis and gluconeogenesis. In addition, may also function as scaffolding protein. This chain is Fructose-bisphosphate aldolase A (Aldoa), found in Mus musculus (Mouse).